The following is a 222-amino-acid chain: MKKHLLPLALLFSGISPAQALDVGDISSFMNSDSSTLSKTIQNSTDSGRLINIRLERLSSPLDDGQVIAMDKPDELLLTPASLLLPAQASEVIRFFYKGPADEKERYYRIVWFDQALSDAQRDNANRSAVATASARIGTILVVAPRQANYHFQYANGSLTNTGNATLRILAYGPCLKAANGKECKENYYLMPGKSRRFTRVDTADNKGRVALWQGDKFIPVK.

The N-terminal stretch at 1–20 (MKKHLLPLALLFSGISPAQA) is a signal peptide.

Belongs to the EcpB/EcpE family.

In terms of biological role, part of the ecpRABCDE operon, which encodes the E.coli common pilus (ECP). ECP is found in both commensal and pathogenic strains and plays a dual role in early-stage biofilm development and host cell recognition. The sequence is that of Probable fimbrial chaperone EcpB (ecpB) from Escherichia coli O127:H6 (strain E2348/69 / EPEC).